Consider the following 449-residue polypeptide: MDTNNDIEKRILELAKQQVSPIEYENYLSQLKYNPNASKSDIAFFYAPNMVLCSTITAKYSALLKEILSQNKVGMHLAHSVDVRIEVASKVHVSDHSNINYKATKSSIKDSYTFENFVVGSCNNTVYEIAKKIAQSDTPPYNPVLFYGGTGLGKTHILNAIGNHALEKHKKVVLVTSEDFLRDFLKHLNNRSMDSFKEKYRHCDFFLLDDAQFLQGKPQLEEEFFHTFNELHANNRQIVLISDRSPKNIAGLEDRLKSRFEWGITAKIMPPDLETKLSIVKQKCQLNKIILPEEVMEYIAQHISDNIRQMEGAIIKISVNANLMNAPIDLNLAKTVLEDLQKDQAEGSSLENILLAVAQSLNLKSSEIKVSSRQKNVALARKLVVYFARLYTPNPTLSLAQFLDLKDHSSISKMYSSIKKMLEEKNPFVLSLKEEIKNRLNELNDKKQH.

The tract at residues 1–75 (MDTNNDIEKR…EILSQNKVGM (75 aa)) is domain I, interacts with DnaA modulators. Positions 75–106 (MHLAHSVDVRIEVASKVHVSDHSNINYKATKS) are domain II. A domain III, AAA+ region region spans residues 107–321 (SIKDSYTFEN…GAIIKISVNA (215 aa)). 4 residues coordinate ATP: Gly151, Gly153, Lys154, and Thr155. Residues 322–449 (NLMNAPIDLN…LNELNDKKQH (128 aa)) are domain IV, binds dsDNA.

This sequence belongs to the DnaA family. In terms of assembly, oligomerizes as a right-handed, spiral filament on DNA at oriC.

It is found in the cytoplasm. Plays an essential role in the initiation and regulation of chromosomal replication. ATP-DnaA binds to the origin of replication (oriC) to initiate formation of the DNA replication initiation complex once per cell cycle. Binds the DnaA box (a 9 base pair repeat at the origin) and separates the double-stranded (ds)DNA. Forms a right-handed helical filament on oriC DNA; dsDNA binds to the exterior of the filament while single-stranded (ss)DNA is stabiized in the filament's interior. The ATP-DnaA-oriC complex binds and stabilizes one strand of the AT-rich DNA unwinding element (DUE), permitting loading of DNA polymerase. After initiation quickly degrades to an ADP-DnaA complex that is not apt for DNA replication. Binds acidic phospholipids. This chain is Chromosomal replication initiator protein DnaA, found in Helicobacter acinonychis (strain Sheeba).